We begin with the raw amino-acid sequence, 254 residues long: 4-hydroxy-tetrahydrodipicolinate reductase (254 aa).

Position 7–12 (7–12 (GASGRI)) interacts with NAD(+). Arg35 is an NADP(+) binding site. NAD(+) contacts are provided by residues 91 to 93 (GTT) and 115 to 118 (AHNM). His147 functions as the Proton donor/acceptor in the catalytic mechanism. His148 lines the (S)-2,3,4,5-tetrahydrodipicolinate pocket. The active-site Proton donor is Lys151. 157 to 158 (GT) serves as a coordination point for (S)-2,3,4,5-tetrahydrodipicolinate.

It belongs to the DapB family.

Its subcellular location is the cytoplasm. It catalyses the reaction (S)-2,3,4,5-tetrahydrodipicolinate + NAD(+) + H2O = (2S,4S)-4-hydroxy-2,3,4,5-tetrahydrodipicolinate + NADH + H(+). The catalysed reaction is (S)-2,3,4,5-tetrahydrodipicolinate + NADP(+) + H2O = (2S,4S)-4-hydroxy-2,3,4,5-tetrahydrodipicolinate + NADPH + H(+). It functions in the pathway amino-acid biosynthesis; L-lysine biosynthesis via DAP pathway; (S)-tetrahydrodipicolinate from L-aspartate: step 4/4. Its function is as follows. Catalyzes the conversion of 4-hydroxy-tetrahydrodipicolinate (HTPA) to tetrahydrodipicolinate. The polypeptide is 4-hydroxy-tetrahydrodipicolinate reductase (Helicobacter pylori (strain G27)).